We begin with the raw amino-acid sequence, 336 residues long: MESLFLLVLGNTEISTIPGISVAGATPELTKITPVADAEYLFHEKPLTIDAIPVTPEGHPTPAIITKAAKELADFPIIVIRGGTYLAPLVPHVHISDVVGRDFRKEIALPEFGEIIKRAKLFGEELNKLPIKELVIGESTPGGTTTAQAVLWALGYEARTSSASPNNPQELKERVIMEGFNRAGIEKGQLSEKPLEALRQFGDPMIATVVGLSLGFRKDIVLAGGTQMLAVSAILKALGEDMKRFMIATTRWVVNDRSATFVETAREIGIITYSADLDFSNSKFKGLRDYERGYVKEGVGAGGATWLAVKSGFSPEDVSEKVEELYERLMRMKSLT.

It belongs to the UPF0284 family.

This is UPF0284 protein PYRAB00380 from Pyrococcus abyssi (strain GE5 / Orsay).